Reading from the N-terminus, the 274-residue chain is uncharacterized protein (274 aa).

Residues 1 to 30 (MTIDTPAREDQTLAATHRAMWALGDYALMA) form the signal peptide.

The protein to M.tuberculosis Rv1403c.

This is an uncharacterized protein from Mycobacterium bovis (strain ATCC BAA-935 / AF2122/97).